A 356-amino-acid chain; its full sequence is Phosphoribosylformylglycinamidine cyclo-ligase (356 aa).

Belongs to the AIR synthase family.

The protein localises to the cytoplasm. The catalysed reaction is 2-formamido-N(1)-(5-O-phospho-beta-D-ribosyl)acetamidine + ATP = 5-amino-1-(5-phospho-beta-D-ribosyl)imidazole + ADP + phosphate + H(+). It functions in the pathway purine metabolism; IMP biosynthesis via de novo pathway; 5-amino-1-(5-phospho-D-ribosyl)imidazole from N(2)-formyl-N(1)-(5-phospho-D-ribosyl)glycinamide: step 2/2. This Acinetobacter baylyi (strain ATCC 33305 / BD413 / ADP1) protein is Phosphoribosylformylglycinamidine cyclo-ligase.